Reading from the N-terminus, the 65-residue chain is Large ribosomal subunit protein bL35 (65 aa).

The protein belongs to the bacterial ribosomal protein bL35 family.

The sequence is that of Large ribosomal subunit protein bL35 from Psychrobacter arcticus (strain DSM 17307 / VKM B-2377 / 273-4).